The sequence spans 73 residues: Somatostatin-2 (73 aa).

Positions 1-45 are excised as a propeptide; that stretch reads SAGLLTQEWSAVEDLLAQMSLPEADAQRDAEMVSTATGGGRMNQE. The disordered stretch occupies residues 23–58; sequence EADAQRDAEMVSTATGGGRMNQESIEPPNNLPPRER. A disulfide bridge connects residues cysteine 62 and cysteine 73.

It belongs to the somatostatin family.

Its subcellular location is the secreted. Somatostatin inhibits the release of somatotropin. This chain is Somatostatin-2 (sst2), found in Platichthys flesus (European flounder).